A 240-amino-acid chain; its full sequence is Manganese transport system ATP-binding protein MntB (240 aa).

The ABC transporter domain occupies 1–233 (MNIQGLTIAY…KIQFAYGDAP (233 aa)). 33–40 (GPNGAGKS) contacts ATP.

The protein belongs to the ABC transporter superfamily.

It localises to the cell membrane. This protein is probably a component of a manganese permease, a binding protein-dependent, ATP-driven transport system. Probably responsible for energy coupling to the transport system. In Listeria innocua serovar 6a (strain ATCC BAA-680 / CLIP 11262), this protein is Manganese transport system ATP-binding protein MntB (mntB).